The sequence spans 343 residues: Aspartate carbamoyltransferase catalytic subunit (343 aa).

Arg91 and Thr92 together coordinate carbamoyl phosphate. Lys119 lines the L-aspartate pocket. Carbamoyl phosphate is bound by residues Arg141, His171, and Gln174. 2 residues coordinate L-aspartate: Arg204 and Arg259. Positions 300 and 301 each coordinate carbamoyl phosphate.

Belongs to the aspartate/ornithine carbamoyltransferase superfamily. ATCase family. In terms of assembly, heterododecamer (2C3:3R2) of six catalytic PyrB chains organized as two trimers (C3), and six regulatory PyrI chains organized as three dimers (R2).

It catalyses the reaction carbamoyl phosphate + L-aspartate = N-carbamoyl-L-aspartate + phosphate + H(+). The protein operates within pyrimidine metabolism; UMP biosynthesis via de novo pathway; (S)-dihydroorotate from bicarbonate: step 2/3. Catalyzes the condensation of carbamoyl phosphate and aspartate to form carbamoyl aspartate and inorganic phosphate, the committed step in the de novo pyrimidine nucleotide biosynthesis pathway. The chain is Aspartate carbamoyltransferase catalytic subunit from Burkholderia multivorans (strain ATCC 17616 / 249).